A 192-amino-acid chain; its full sequence is UPF0312 protein Psyr_0457 (192 aa).

The signal sequence occupies residues 1-23 (MLKKSLAALALGTALLSAGQAMA).

This sequence belongs to the UPF0312 family. Type 1 subfamily.

Its subcellular location is the periplasm. The chain is UPF0312 protein Psyr_0457 from Pseudomonas syringae pv. syringae (strain B728a).